Here is a 287-residue protein sequence, read N- to C-terminus: T-cell ecto-ADP-ribosyltransferase 1 (287 aa).

A signal peptide spans 1–20 (MPSNNFKFFLTWWLTQQVTG). 3 disulfide bridges follow: Cys-41–Cys-246, Cys-80–Cys-201, and Cys-141–Cys-193. The region spanning 61 to 241 (EELKLEWEKA…ISLDSPKRKK (181 aa)) is the TR mART core domain. Residues Tyr-98 and Arg-146 each contribute to the NAD(+) site. Residues Arg-146 and Ser-167 contribute to the active site. Asn-171 is a glycosylation site (N-linked (GlcNAc...) asparagine). Ser-202 lines the NAD(+) pocket. The active site involves Glu-209. Asn-256 carries N-linked (GlcNAc...) asparagine glycosylation. The GPI-anchor amidated serine moiety is linked to residue Ser-258. A propeptide spans 259-287 (SLGSRESCVSLFLVVLLGLLVQQLTLAEP) (removed in mature form).

It belongs to the Arg-specific ADP-ribosyltransferase family. In terms of processing, it is proposed that in the absence of reducing agents, a disulfide bond is formed between Cys-80 and Cys-201, leading to a conformational change that reduces the catalytic rate of NAD glycohydrolysis. Expressed in spleen, intestine and thymus.

The protein localises to the cell membrane. It carries out the reaction L-arginyl-[protein] + NAD(+) = N(omega)-(ADP-D-ribosyl)-L-arginyl-[protein] + nicotinamide + H(+). It catalyses the reaction NAD(+) + H2O = ADP-D-ribose + nicotinamide + H(+). Functionally, has both ADP-ribosyltransferase activity and thiol-dependent NAD(+) glycohydrolase activity. This is T-cell ecto-ADP-ribosyltransferase 1 (Art2a) from Mus musculus (Mouse).